The sequence spans 2371 residues: Highly reducing polyketide synthase ntnH (2371 aa).

The 420-residue stretch at 10–429 (PSPIAIVGIG…GANAHVILEG (420 aa)) folds into the Ketosynthase family 3 (KS3) domain. Residues Cys180, His316, and His352 each act as for beta-ketoacyl synthase activity in the active site. The interval 528–796 (FIFTGQGAQW…NSCLSRGADA (269 aa)) is malonyl-CoA:ACP transacylase (MAT) domain. Residues 858-986 (HELLGARVIG…GKVHPGNAST (129 aa)) are N-terminal hotdog fold. The segment at 858–1142 (HELLGARVIG…GIRFRILENN (285 aa)) is dehydratase (DH) domain. Positions 858–1145 (HELLGARVIG…FRILENNRSK (288 aa)) constitute a PKS/mFAS DH domain. His890 (proton acceptor; for dehydratase activity) is an active-site residue. The C-terminal hotdog fold stretch occupies residues 1001–1145 (VRGVISAKWY…FRILENNRSK (145 aa)). Asp1059 serves as the catalytic Proton donor; for dehydratase activity. The segment at 1309–1456 (FFQLLGHNKK…FENVTAIMDQ (148 aa)) is methyltransferase (CMet) domain. The enoyl reductase (ER) (ER) domain stretch occupies residues 1669–1968 (GLLSSLQWQG…GHRPIGAICI (300 aa)). The interval 1993–2167 (SYVLIGGLGG…ASVIDLGVME (175 aa)) is ketoreductase (KR) domain. In terms of domain architecture, Carrier spans 2280–2362 (EDETAVAEFL…DLGKLARSRI (83 aa)). Position 2322 is an O-(pantetheine 4'-phosphoryl)serine (Ser2322).

The protein operates within secondary metabolite biosynthesis; terpenoid biosynthesis. In terms of biological role, highly reducing polyketide synthase; part of the gene cluster that mediates the biosynthesis of the meroterpenoids nectripenoids A and B, as well as cochliquninone D and isocochliquninone E. The pathway probably begins with the HR-PKS ntnH that catalyzes two chain-extension steps to form a reduced triketide, which then primes the SAT domain in the NR-PKS ntnG to initiate three more cycles of extension to give a linear hexaketide corresponding to the polyketide part of nectripenoids. The FAD-dependent monooxygenase ntnJ then performs an oxidative decarboxylation at C11 of the ntnH/ntnG product, via an electrophilic aromatic hydroxylation with concomitant ipso-decarboxylation. The membrane-bound polyprenyl transferase ntnF then introduces a farnesyl group before the FAD-dependent monooxygenase ntnK functions as the first epoxidase on terminal C12'-C13' olefin, followed by a second epoxidation on C7'-C8' catalyzed by ntnA. The terpene cyclase/mutase ntnI then initiates the sequential tricyclic ring formation through protonation of the terminal epoxide and catalyzes the regioselective and stereoselective 6/6/6-tricyclic ring formation. The cytochrome P450 monooxygenase ntnM may then hydroxylate C1'. This chain is Highly reducing polyketide synthase ntnH, found in Nectria sp.